A 492-amino-acid polypeptide reads, in one-letter code: AAA-ATPase At3g28520 (492 aa).

A helical membrane pass occupies residues 7 to 25 (IWGFTSTTMASIMFLWPMY). Residue 249-256 (GPPGTGKS) participates in ATP binding. Disordered regions lie at residues 313-334 (KKKKEEDEDKEEKKEAENLKRV) and 462-492 (KIEKEARKNKKKAEDNVKQEKQNKVKGMVTK). Basic and acidic residues-rich tracts occupy residues 323 to 332 (EEKKEAENLK) and 462 to 484 (KIEKEARKNKKKAEDNVKQEKQN).

It belongs to the AAA ATPase family. BCS1 subfamily. Requires Mg(2+) as cofactor.

It is found in the membrane. It carries out the reaction ATP + H2O = ADP + phosphate + H(+). The sequence is that of AAA-ATPase At3g28520 from Arabidopsis thaliana (Mouse-ear cress).